Here is a 280-residue protein sequence, read N- to C-terminus: Pantothenate synthetase (280 aa).

Position 30–37 (30–37 (MGYLHEGH)) interacts with ATP. The active-site Proton donor is His37. (R)-pantoate is bound at residue Gln61. Beta-alanine is bound at residue Gln61. ATP is bound at residue 147–150 (GQKD). Gln153 is a binding site for (R)-pantoate. ATP contacts are provided by residues Val176 and 184–187 (MSSR).

It belongs to the pantothenate synthetase family. Homodimer.

The protein resides in the cytoplasm. It catalyses the reaction (R)-pantoate + beta-alanine + ATP = (R)-pantothenate + AMP + diphosphate + H(+). The protein operates within cofactor biosynthesis; (R)-pantothenate biosynthesis; (R)-pantothenate from (R)-pantoate and beta-alanine: step 1/1. Its function is as follows. Catalyzes the condensation of pantoate with beta-alanine in an ATP-dependent reaction via a pantoyl-adenylate intermediate. This Thermotoga neapolitana protein is Pantothenate synthetase.